Consider the following 253-residue polypeptide: MKYRRILLKLSGEALMGERPYGIDPEVLKSIAGEVASVVRAGVQVAIVVGGGNIWRGRKEAAAQGMDQASADYVGMLATVINALTLQDAIERAGIPTRVQTAIAMQEVAEPYIRRRAIRHLEKGRVVIFGAGSGNPFFTTDTTAALRAAEIDAEVIFKATKVDGVYDADPKTHPQARRYDVLSYQDVLNRDLRVMDSTAIALCKENQLPIVVFDLTTPGNIYRVVQGEPIGTWIGQRTVENNGIPSPGELIPS.

9-12 is a binding site for ATP; the sequence is KLSG. Gly51 contributes to the UMP binding site. The ATP site is built by Gly52 and Arg56. UMP is bound by residues Asp72 and 133–140; that span reads SGNPFFTT. ATP is bound by residues Thr160, Tyr166, and Asp169.

The protein belongs to the UMP kinase family. Homohexamer.

It is found in the cytoplasm. The enzyme catalyses UMP + ATP = UDP + ADP. Its pathway is pyrimidine metabolism; CTP biosynthesis via de novo pathway; UDP from UMP (UMPK route): step 1/1. Its activity is regulated as follows. Inhibited by UTP. Functionally, catalyzes the reversible phosphorylation of UMP to UDP. The protein is Uridylate kinase of Synechococcus sp. (strain JA-2-3B'a(2-13)) (Cyanobacteria bacterium Yellowstone B-Prime).